A 205-amino-acid polypeptide reads, in one-letter code: Adenylyl-sulfate kinase (205 aa).

31 to 38 contributes to the ATP binding site; the sequence is GLSGSGKS. The Phosphoserine intermediate role is filled by S105.

It belongs to the APS kinase family.

The enzyme catalyses adenosine 5'-phosphosulfate + ATP = 3'-phosphoadenylyl sulfate + ADP + H(+). It participates in sulfur metabolism; hydrogen sulfide biosynthesis; sulfite from sulfate: step 2/3. In terms of biological role, catalyzes the synthesis of activated sulfate. The chain is Adenylyl-sulfate kinase from Shewanella pealeana (strain ATCC 700345 / ANG-SQ1).